We begin with the raw amino-acid sequence, 367 residues long: Uroporphyrinogen decarboxylase (367 aa).

An N-acetylmethionine modification is found at methionine 1. The coproporphyrinogen I site is built by arginine 37, alanine 39, arginine 41, arginine 50, aspartate 86, tyrosine 164, serine 219, and histidine 339. Coproporphyrinogen III-binding residues include arginine 37, alanine 39, and arginine 41. Coproporphyrinogen III-binding residues include aspartate 86, tyrosine 164, serine 219, and histidine 339.

This sequence belongs to the uroporphyrinogen decarboxylase family. Homodimer.

The protein localises to the cytoplasm. Its subcellular location is the cytosol. The enzyme catalyses uroporphyrinogen III + 4 H(+) = coproporphyrinogen III + 4 CO2. The catalysed reaction is uroporphyrinogen I + 4 H(+) = coproporphyrinogen I + 4 CO2. Its pathway is porphyrin-containing compound metabolism; protoporphyrin-IX biosynthesis; coproporphyrinogen-III from 5-aminolevulinate: step 4/4. Its function is as follows. Catalyzes the sequential decarboxylation of the four acetate side chains of uroporphyrinogen to form coproporphyrinogen and participates in the fifth step in the heme biosynthetic pathway. Isomer I or isomer III of uroporphyrinogen may serve as substrate, but only coproporphyrinogen III can ultimately be converted to heme. In vitro also decarboxylates pentacarboxylate porphyrinogen I. This chain is Uroporphyrinogen decarboxylase, found in Mus musculus (Mouse).